We begin with the raw amino-acid sequence, 536 residues long: Pre-mRNA 3'-end-processing factor FIP1 (536 aa).

Basic and acidic residues-rich tracts occupy residues 1 to 10 (MSAGEVERLV) and 32 to 42 (VHVHSDLAKDL). Disordered regions lie at residues 1–95 (MSAG…EDDV), 212–246 (VQQG…GLPP), and 300–536 (FPPG…APAE). The tract at residues 1–110 (MSAGEVERLV…DIKTGAPQYG (110 aa)) is sufficient for interaction with PAPOLA. Residues 1–296 (MSAGEVERLV…TEVDNNFSKP (296 aa)) form a necessary for stimulating PAPOLA activity region. 2 stretches are compositionally biased toward acidic residues: residues 43–54 (DENEVERPEEEN) and 80–94 (TEDD…DEDD). Residues Ser84, Ser86, and Ser88 each carry the phosphoserine modification. The interval 136-219 (KGVDLDAPGS…ITVQQGRTGN (84 aa)) is sufficient for interaction with CPSF4. Pro residues predominate over residues 300–344 (FPPGAPPTHLPPPPFLPPPPTVSTAPPLIPPPGFPPPPGAPPPSL). Tyr366 bears the Phosphotyrosine mark. Residues 374–390 (LTSSAPSWPSLVDTTKQ) are compositionally biased toward polar residues. Residues 383 to 536 (SLVDTTKQWD…QESTEAAPAE (154 aa)) are sufficient for interaction with CPSF1 and CSTF3. The span at 394–434 (YARREKDRDRDRERDRDRERERDRDRERERTRERERERDHS) shows a compositional bias: basic and acidic residues. The arg/Asp/Glu-rich domain stretch occupies residues 397–432 (REKDRDRDRERDRDRERERDRDRERERTRERERERD). At Ser434 the chain carries Phosphoserine. Phosphothreonine is present on Thr436. 2 positions are modified to phosphoserine: Ser438 and Ser442. Residues 443 to 470 (DEERYRYREYAERGYERHRASREKEERH) show a composition bias toward basic and acidic residues. The segment covering 484 to 493 (KSSRSNSRRR) has biased composition (basic residues). Phosphoserine is present on Ser496. A compositionally biased stretch (basic residues) spans 502 to 512 (HRRHKHKKSKR).

This sequence belongs to the FIP1 family. In terms of assembly, component of the cleavage and polyadenylation specificity factor (CPSF) complex, composed of CPSF1, CPSF2, CPSF3, CPSF4 and FIP1L1. Found in a complex with CPSF1, FIP1L1 and PAPOLA. Interacts with CPSF1, CPSF4, CSTF2 and CSTF3. Interacts with AHCYL1 (when phosphorylated); the interaction is direct and associates AHCYL1 with the CPSF complex and RNA. Interacts with PAPOLA; the interaction seems to be increased by the interaction with AHCYL1. Interacts with NUDT21/CPSF5; this interaction occurs in a RNA sequence-specific manner. Interacts (preferentially via unphosphorylated form and Arg/Glu/Asp-rich domain) with CPSF6 (via Arg/Ser-rich domain); this interaction mediates, at least in part, the interaction between the CFIm and CPSF complexes and may be inhibited by CPSF6 hyper-phosphorylation. Interacts (preferentially via unphosphorylated form and Arg/Asp/Glu-rich domain) with CPSF7 (via Arg/Ser-rich domain); this interaction mediates, at least in part, the interaction between the CFIm and CPSF complexes and may be inhibited by CPSF7 hyper-phosphorylation.

The protein localises to the nucleus. Its function is as follows. Component of the cleavage and polyadenylation specificity factor (CPSF) complex that plays a key role in pre-mRNA 3'-end formation, recognizing the AAUAAA signal sequence and interacting with poly(A) polymerase and other factors to bring about cleavage and poly(A) addition. FIP1L1 contributes to poly(A) site recognition and stimulates poly(A) addition. Binds to U-rich RNA sequence elements surrounding the poly(A) site. May act to tether poly(A) polymerase to the CPSF complex. This Rattus norvegicus (Rat) protein is Pre-mRNA 3'-end-processing factor FIP1 (Fip1l1).